We begin with the raw amino-acid sequence, 3974 residues long: Hybrid PKS-NRPS synthetase 1 (3974 aa).

The Ketosynthase family 3 (KS3) domain maps to 5 to 442 (SQKIAIIGSA…GTNAHCLIES (438 aa)). Residues C179, H316, and H362 each act as for beta-ketoacyl synthase activity in the active site. A malonyl-CoA:ACP transacylase (MAT) domain region spans residues 561–883 (IFTGQGAQWA…TGILERGLDD (323 aa)). Residues 954-1079 (HPLLGSRLSA…HDSELGIPES (126 aa)) are N-terminal hotdog fold. The segment at 954-1251 (HPLLGSRLSA…QVESVKLVPV (298 aa)) is dehydratase (DH) domain. Residues 954–1257 (HPLLGSRLSA…LVPVITPDAS (304 aa)) enclose the PKS/mFAS DH domain. The active-site Proton acceptor; for dehydratase activity is the H986. The interval 1107–1257 (TTPISSAKIY…LVPVITPDAS (151 aa)) is C-terminal hotdog fold. D1165 acts as the Proton donor; for dehydratase activity in catalysis. A methyltransferase (MT) domain region spans residues 1398–1529 (PWNTELRNAI…GYLLLVAKTG (132 aa)). The tract at residues 2108–2282 (TYFLAGMTDS…ASIMDTGVVT (175 aa)) is ketoreductase (KR) domain. Residues 2492 to 2516 (AGRSASPGASCSDRSLSTRSDETRS) are disordered. The segment covering 2498–2509 (PGASCSDRSLST) has biased composition (polar residues). The interval 2560–2994 (APLSPGQAQL…LERLRTSSDQ (435 aa)) is condensation (C) domain. The interval 3021 to 3423 (DAMAEKYFDQ…DGSLILLGRM (403 aa)) is adenylation (A) (KR) domain. In terms of domain architecture, Carrier spans 3537 to 3613 (SADQLVEAEV…EMAEKMASVR (77 aa)). Position 3573 is an O-(pantetheine 4'-phosphoryl)serine (S3573). The reductase (RED) domain stretch occupies residues 3657–3940 (VVLTGAADLL…KLEMGEWIAL (284 aa)).

It in the C-terminal section; belongs to the NRP synthetase family.

It participates in secondary metabolite biosynthesis. In terms of biological role, hybrid PKS-NRPS synthetase; part of the hps1-dma1 gene cluster that probably mediates the biosynthesis a derivative of cyclopiazonic acid (CPA). The hybrid polyketide synthase-nonribosomal peptide synthetase (PKS-NRPS) nps1 might incorporates acetyl-CoA, malonyl-CoA, and tryptophan (Trp) and utilizes a C-terminal redox-incompetent reductase domain to make and release the tryptophan tetramic acid, cyclo-acetoacetyl-L-tryptophan (c-AATrp), as the first intermediate in the pathway. In addition, the cluster also includes the tryptophan dimethylallyltransferase dma1, the FAD-dependent oxidoreductase toxD, the cytochrome P450 monooxygenase cyp3.1 and the methyltransferase DOTSEDRAFT_139328; the latter 2 being not present in all CPA-producing fungi but involved in additional modifications that occur in biosynthesis the of a range of CPA and CPA-like products. Further studies are required to clarify whether the CPA-like hps1-dma1 cluster is functional or a non-functional relic reflecting evolution of D.septosporum. The protein is Hybrid PKS-NRPS synthetase 1 of Dothistroma septosporum (strain NZE10 / CBS 128990) (Red band needle blight fungus).